We begin with the raw amino-acid sequence, 223 residues long: Urease accessory protein UreF (223 aa).

Belongs to the UreF family. In terms of assembly, ureD, UreF and UreG form a complex that acts as a GTP-hydrolysis-dependent molecular chaperone, activating the urease apoprotein by helping to assemble the nickel containing metallocenter of UreC. The UreE protein probably delivers the nickel.

It localises to the cytoplasm. Its function is as follows. Required for maturation of urease via the functional incorporation of the urease nickel metallocenter. This Rhizobium leguminosarum bv. viciae protein is Urease accessory protein UreF.